Reading from the N-terminus, the 352-residue chain is Histidinol-phosphate aminotransferase (352 aa).

Position 221 is an N6-(pyridoxal phosphate)lysine (lysine 221).

This sequence belongs to the class-II pyridoxal-phosphate-dependent aminotransferase family. Histidinol-phosphate aminotransferase subfamily. In terms of assembly, homodimer. Requires pyridoxal 5'-phosphate as cofactor.

It carries out the reaction L-histidinol phosphate + 2-oxoglutarate = 3-(imidazol-4-yl)-2-oxopropyl phosphate + L-glutamate. It functions in the pathway amino-acid biosynthesis; L-histidine biosynthesis; L-histidine from 5-phospho-alpha-D-ribose 1-diphosphate: step 7/9. This chain is Histidinol-phosphate aminotransferase, found in Staphylococcus aureus (strain MRSA252).